The following is a 427-amino-acid chain: MTSNEWSSPDSPEGSSISGGSQALDKPIDNDAEGVWSPEIERSFQEALAIYPPCGRRKIILTEEGKMYGRNELIARHIKLRTGKTRTRKQVSSHIQVLARRKAREIQAKLKDQAAKNKALQSMAAMSSAQIVSATAFHSKMALARGPGYPAISGFWQGALPGQPGTSHDVKPFSQNTYPVQPPLPLPGFESPAGPTPSPSAPLAPPWQGRSIASSKLWMLEFSAFLERQQDPDTYNKHLFVHISQSSPSYSDPYLETVDIRQIYDKFPEKKGGLKELFERGPSNAFFLVKFWADLNTNIDDEGSAFYGVSSQYESPENMIITCSTKVCSFGKQVVEKVETEYARYENGHYLYRIHRSPLCEYMINFIHKLKHLPEKYMMNSVLENFTILQVVTNRDTQETLLCIAYVFEVSASEHGAQHHIYRLVKE.

Residues 1-32 are disordered; that stretch reads MTSNEWSSPDSPEGSSISGGSQALDKPIDNDA. Low complexity predominate over residues 7 to 21; sequence SSPDSPEGSSISGGS. Residues 29–105 constitute a DNA-binding region (TEA); it reads DNDAEGVWSP…QVLARRKARE (77 aa). A Nuclear localization signal motif is present at residues 78–94; it reads IKLRTGKTRTRKQVSSH. Residues 163–206 form a disordered region; sequence QPGTSHDVKPFSQNTYPVQPPLPLPGFESPAGPTPSPSAPLAPP. Residues 194–205 are compositionally biased toward pro residues; that stretch reads GPTPSPSAPLAP.

As to quaternary structure, interacts with WWTR1/TAZ. Interacts with YAP1. As to expression, preferentially expressed in lung and in skeletal muscle.

The protein resides in the nucleus. Transcription factor which plays a key role in the Hippo signaling pathway, a pathway involved in organ size control and tumor suppression by restricting proliferation and promoting apoptosis. The core of this pathway is composed of a kinase cascade wherein MST1/MST2, in complex with its regulatory protein SAV1, phosphorylates and activates LATS1/2 in complex with its regulatory protein MOB1, which in turn phosphorylates and inactivates YAP1 oncoprotein and WWTR1/TAZ. Acts by mediating gene expression of YAP1 and WWTR1/TAZ, thereby regulating cell proliferation, migration and epithelial mesenchymal transition (EMT) induction. Binds specifically and non-cooperatively to the Sph and GT-IIC 'enhansons' (5'-GTGGAATGT-3') and activates transcription. Binds to the M-CAT motif. Might play a role in the embryonic development of skeletal muscle. The sequence is that of Transcriptional enhancer factor TEF-3 (Tead4) from Mus musculus (Mouse).